The primary structure comprises 425 residues: Serine--tRNA ligase (425 aa).

L-serine is bound at residue 233-235 (TAE). Position 264–266 (264–266 (RAE)) interacts with ATP. Glu287 provides a ligand contact to L-serine. 351–354 (EISS) is an ATP binding site. Residue Ser387 participates in L-serine binding.

Belongs to the class-II aminoacyl-tRNA synthetase family. Type-1 seryl-tRNA synthetase subfamily. As to quaternary structure, homodimer. The tRNA molecule binds across the dimer.

The protein resides in the cytoplasm. It carries out the reaction tRNA(Ser) + L-serine + ATP = L-seryl-tRNA(Ser) + AMP + diphosphate + H(+). It catalyses the reaction tRNA(Sec) + L-serine + ATP = L-seryl-tRNA(Sec) + AMP + diphosphate + H(+). The protein operates within aminoacyl-tRNA biosynthesis; selenocysteinyl-tRNA(Sec) biosynthesis; L-seryl-tRNA(Sec) from L-serine and tRNA(Sec): step 1/1. In terms of biological role, catalyzes the attachment of serine to tRNA(Ser). Is also able to aminoacylate tRNA(Sec) with serine, to form the misacylated tRNA L-seryl-tRNA(Sec), which will be further converted into selenocysteinyl-tRNA(Sec). The polypeptide is Serine--tRNA ligase (Clostridium botulinum (strain Alaska E43 / Type E3)).